The primary structure comprises 194 residues: Imidazoleglycerol-phosphate dehydratase (194 aa).

The protein belongs to the imidazoleglycerol-phosphate dehydratase family.

The protein resides in the cytoplasm. The catalysed reaction is D-erythro-1-(imidazol-4-yl)glycerol 3-phosphate = 3-(imidazol-4-yl)-2-oxopropyl phosphate + H2O. The protein operates within amino-acid biosynthesis; L-histidine biosynthesis; L-histidine from 5-phospho-alpha-D-ribose 1-diphosphate: step 6/9. The protein is Imidazoleglycerol-phosphate dehydratase of Sulfurisphaera tokodaii (strain DSM 16993 / JCM 10545 / NBRC 100140 / 7) (Sulfolobus tokodaii).